A 394-amino-acid chain; its full sequence is S-adenosylmethionine synthase (394 aa).

His16 serves as a coordination point for ATP. Mg(2+) is bound at residue Asp18. Glu44 is a K(+) binding site. Residues Glu57 and Gln100 each coordinate L-methionine. The tract at residues 100–110 is flexible loop; it reads QSPDIAQGVDA. Residues 172–174, 239–240, Asp248, 254–255, Ala271, and Lys275 each bind ATP; these read DAK, RF, and RK. Asp248 is a binding site for L-methionine. Lys279 is a binding site for L-methionine.

Belongs to the AdoMet synthase family. Homotetramer; dimer of dimers. It depends on Mg(2+) as a cofactor. The cofactor is K(+).

The protein localises to the cytoplasm. The enzyme catalyses L-methionine + ATP + H2O = S-adenosyl-L-methionine + phosphate + diphosphate. The protein operates within amino-acid biosynthesis; S-adenosyl-L-methionine biosynthesis; S-adenosyl-L-methionine from L-methionine: step 1/1. Functionally, catalyzes the formation of S-adenosylmethionine (AdoMet) from methionine and ATP. The overall synthetic reaction is composed of two sequential steps, AdoMet formation and the subsequent tripolyphosphate hydrolysis which occurs prior to release of AdoMet from the enzyme. The sequence is that of S-adenosylmethionine synthase from Enterococcus faecalis (strain ATCC 700802 / V583).